The sequence spans 197 residues: Imidazoleglycerol-phosphate dehydratase (197 aa).

Belongs to the imidazoleglycerol-phosphate dehydratase family.

The protein localises to the cytoplasm. The enzyme catalyses D-erythro-1-(imidazol-4-yl)glycerol 3-phosphate = 3-(imidazol-4-yl)-2-oxopropyl phosphate + H2O. It functions in the pathway amino-acid biosynthesis; L-histidine biosynthesis; L-histidine from 5-phospho-alpha-D-ribose 1-diphosphate: step 6/9. The sequence is that of Imidazoleglycerol-phosphate dehydratase from Pseudomonas putida (strain W619).